The following is a 64-amino-acid chain: Disintegrin VB7A (64 aa).

The 64-residue stretch at 1–64 folds into the Disintegrin domain; that stretch reads NSGNPCCDPV…SDCPRNPYKD (64 aa). 4 disulfides stabilise this stretch: C6-C29, C20-C26, C25-C50, and C38-C57. The Cell attachment site motif lies at 42 to 44; sequence RGD.

It belongs to the disintegrin family. Dimeric disintegrin subfamily. As to quaternary structure, heterodimer with VB7B; disulfide-linked. Expressed by the venom gland.

The protein localises to the secreted. In terms of biological role, poor inhibitor of platelet aggregation. The disintegrin inhibits the adhesion of cells expressing the RGD-dependent integrin alpha-5/beta-1 (ITGA5/ITGB1) to immobilized fibronectin. Inhibition on alpha-2b/beta-3 (ITGA2B/ITGB3) is low. This Vipera berus berus (Common viper) protein is Disintegrin VB7A.